Consider the following 182-residue polypeptide: Isopentenyl-diphosphate Delta-isomerase (182 aa).

Mn(2+) contacts are provided by histidine 25 and histidine 32. The Nudix hydrolase domain occupies 30–164 (LLHLAFSSWL…PWAFSPWMVM (135 aa)). Residue cysteine 67 is part of the active site. Histidine 69 contacts Mn(2+). Glutamate 87 contacts Mg(2+). Residues glutamate 114 and glutamate 116 each contribute to the Mn(2+) site. Glutamate 116 is a catalytic residue.

This sequence belongs to the IPP isomerase type 1 family. As to quaternary structure, homodimer. Mg(2+) serves as cofactor. Mn(2+) is required as a cofactor.

Its subcellular location is the cytoplasm. It catalyses the reaction isopentenyl diphosphate = dimethylallyl diphosphate. It functions in the pathway isoprenoid biosynthesis; dimethylallyl diphosphate biosynthesis; dimethylallyl diphosphate from isopentenyl diphosphate: step 1/1. Functionally, catalyzes the 1,3-allylic rearrangement of the homoallylic substrate isopentenyl (IPP) to its highly electrophilic allylic isomer, dimethylallyl diphosphate (DMAPP). The sequence is that of Isopentenyl-diphosphate Delta-isomerase from Escherichia coli O7:K1 (strain IAI39 / ExPEC).